The following is a 268-amino-acid chain: Diaminopimelate epimerase (268 aa).

Asparagine 13, glutamine 46, and asparagine 64 together coordinate substrate. Catalysis depends on cysteine 73, which acts as the Proton donor. Residues 74-75 (GN), asparagine 148, asparagine 181, and 199-200 (ER) each bind substrate. Cysteine 208 acts as the Proton acceptor in catalysis. A substrate-binding site is contributed by 209–210 (GT).

The protein belongs to the diaminopimelate epimerase family. In terms of assembly, homodimer.

It localises to the cytoplasm. It catalyses the reaction (2S,6S)-2,6-diaminopimelate = meso-2,6-diaminopimelate. The protein operates within amino-acid biosynthesis; L-lysine biosynthesis via DAP pathway; DL-2,6-diaminopimelate from LL-2,6-diaminopimelate: step 1/1. Catalyzes the stereoinversion of LL-2,6-diaminopimelate (L,L-DAP) to meso-diaminopimelate (meso-DAP), a precursor of L-lysine and an essential component of the bacterial peptidoglycan. In Sphingopyxis alaskensis (strain DSM 13593 / LMG 18877 / RB2256) (Sphingomonas alaskensis), this protein is Diaminopimelate epimerase.